The following is a 313-amino-acid chain: MARTEDDSWEITESVGATALGVASARAAETRSQHPLISDPFAQVFLDAVGDGVWNWHSAPQLPAELLEIEPDLPLQMEAMVSYMASRTAFFDEFFLDATRAGIGQAVILAAGLDSRAWRLPWPAGTTVFELDQPRVLEFKAATLAEHGAEPACGRVAVAVDLRQDWPTALRQAGFDPSVPSVWSAEGLMPYLPAVAQDLLFERVQGLTVRASRIAVEALGPKFLDPQVRANRSARMERIRAVMAHVEPQREIPRTDELWYFEEREDVGDWFRRHDWDVTVTPSGELMAGYGRAAAAQVEDRVPTNLFVAAQRK.

S-adenosyl-L-methionine contacts are provided by residues Asp-132 and 161–162; that span reads DL.

It belongs to the UPF0677 family.

In terms of biological role, exhibits S-adenosyl-L-methionine-dependent methyltransferase activity. The sequence is that of Putative S-adenosyl-L-methionine-dependent methyltransferase MMAR_0955 from Mycobacterium marinum (strain ATCC BAA-535 / M).